A 260-amino-acid polypeptide reads, in one-letter code: 14-3-3-like protein (260 aa).

The protein belongs to the 14-3-3 family.

This chain is 14-3-3-like protein, found in Pisum sativum (Garden pea).